Here is a 504-residue protein sequence, read N- to C-terminus: Probable phenylalanine--tRNA ligase beta subunit (504 aa).

A B5 domain is found at 270-346 (IKDKSYLLSI…ICYGFNNINM (77 aa)). 4 residues coordinate Mg(2+): D324, D330, E333, and D334.

Belongs to the phenylalanyl-tRNA synthetase beta subunit family. Type 2 subfamily. As to quaternary structure, tetramer of two alpha and two beta subunits. Mg(2+) is required as a cofactor.

The protein localises to the cytoplasm. The enzyme catalyses tRNA(Phe) + L-phenylalanine + ATP = L-phenylalanyl-tRNA(Phe) + AMP + diphosphate + H(+). This chain is Probable phenylalanine--tRNA ligase beta subunit, found in Vairimorpha ceranae (strain BRL01) (Microsporidian parasite).